Consider the following 339-residue polypeptide: Deoxyguanosinetriphosphate triphosphohydrolase-like protein (339 aa).

One can recognise an HD domain in the interval arginine 75–isoleucine 186.

The protein belongs to the dGTPase family. Type 2 subfamily.

The chain is Deoxyguanosinetriphosphate triphosphohydrolase-like protein from Caldanaerobacter subterraneus subsp. tengcongensis (strain DSM 15242 / JCM 11007 / NBRC 100824 / MB4) (Thermoanaerobacter tengcongensis).